Consider the following 354-residue polypeptide: Type II secretion system protein K (354 aa).

The propeptide at 1 to 7 (MSRRQRG) is leader sequence. The chain crosses the membrane as a helical span at residues 8 to 28 (VALLIVMLMLSLMVTIAASIT). Residues 29 to 354 (ERSGKAWQRT…QYGGYRTVNP (326 aa)) lie on the Periplasmic side of the membrane. The interval 114–151 (NVTPNNASGNNTSGNNNAANGSSGNGNSPQPPKVGTSE) is disordered. A compositionally biased stretch (low complexity) spans 118–141 (NNASGNNTSGNNNAANGSSGNGNS).

This sequence belongs to the GSP K family. Type II secretion is composed of four main components: the outer membrane complex, the inner membrane complex, the cytoplasmic secretion ATPase and the periplasm-spanning pseudopilus. Interacts with core component OutG. Cleaved by prepilin peptidase.

Its subcellular location is the cell inner membrane. Component of the type II secretion system required for the energy-dependent secretion of extracellular factors such as proteases and toxins from the periplasm. Plays a role in pseudopilus assembly and seems to control its length. Interacts with the pseudopilus tip complex that is critical for the recognition and binding of secretion substrates. The protein is Type II secretion system protein K (outK) of Dickeya chrysanthemi (Pectobacterium chrysanthemi).